The following is a 426-amino-acid chain: Glutamate-1-semialdehyde 2,1-aminomutase (426 aa).

Lys-265 carries the post-translational modification N6-(pyridoxal phosphate)lysine.

Belongs to the class-III pyridoxal-phosphate-dependent aminotransferase family. HemL subfamily. As to quaternary structure, homodimer. Pyridoxal 5'-phosphate is required as a cofactor.

The protein localises to the cytoplasm. The catalysed reaction is (S)-4-amino-5-oxopentanoate = 5-aminolevulinate. It participates in porphyrin-containing compound metabolism; protoporphyrin-IX biosynthesis; 5-aminolevulinate from L-glutamyl-tRNA(Glu): step 2/2. In Escherichia fergusonii (strain ATCC 35469 / DSM 13698 / CCUG 18766 / IAM 14443 / JCM 21226 / LMG 7866 / NBRC 102419 / NCTC 12128 / CDC 0568-73), this protein is Glutamate-1-semialdehyde 2,1-aminomutase.